Here is a 1314-residue protein sequence, read N- to C-terminus: Tetratricopeptide repeat protein 21A (1314 aa).

TPR repeat units follow at residues 110–143 (STALYYASLFLWFMGHHDKAREYVDHMLKVSSGS), 214–247 (LPALVLKMKLFLARQDWDQTIETGQRILEKDENN), 326–359 (ALVATELGYLFILHQQVKEACLWYKEAMKLEENR), 494–527 (MEPLYVTAQVKFLSGELENAQSTLQRCLELDPTF), 529–561 (DAHLLMSQIYLAQGNFAMCSHCLELGVSHNFQV), 565–598 (PLYHFIKARALNKTGDYAEAIKTLKMIIKVPTSK), 616–649 (ASILLELVEALRLNGELHEATKIMQDAINEFSGT), 721–754 (PHSSLLLGDAFMNIQEPEKALEVYDEAYRKNPHD), 755–788 (ASLVSRIGQAYVKTHQYAKAINYYEAAQKISGQD), 790–821 (LCCELAELLLKLKKYHKAEKVLKQALERDSGV), 831–863 (VKCLLLLAKVYKSHKKEEVMETLNLALDLQSRI), 883–916 (ASICIQIGEHHLAEKDYDSALKSYKDALAYSPTD), 918–950 (KVVLELAHLYLLLGQLDLCEQRCAPLLEMEQTH), 951–984 (ERAAVMLADLMFRRQNYETAINLYHQVLEKAPDN), 986–1018 (LVLNKLVDLLRRSGKLEEAPAFFELAKKVSSRV), 1022–1055 (PGFNYCQGIYFWHIGQPNEALRFLNKARKDSTWG), 1195–1228 (EKSWLLLADIYCQGGKFDLALELLRRCLQYNKSC), 1230–1262 (RAYEYMGFIMEKEQSYKDAATNYELAWKYSHQA), and 1264–1297 (PAIGFKLAFNYLKDKKFVDAIEVCHSVLTEHPKY).

It belongs to the TTC21 family. In terms of assembly, interacts with IFT20. Interacts with IFT52. Interacts with IFT140. Interacts with CEP78; regulating IFT20 stability and localization.

Intraflagellar transport (IFT)-associated protein required for spermatogenesis. Required for sperm flagellar formation and intraflagellar transport. The protein is Tetratricopeptide repeat protein 21A (Ttc21a) of Mus musculus (Mouse).